A 105-amino-acid chain; its full sequence is Large ribosomal subunit protein eL30 (105 aa).

It belongs to the eukaryotic ribosomal protein eL30 family.

This Trypanosoma brucei brucei protein is Large ribosomal subunit protein eL30 (RPL30).